The following is a 51-amino-acid chain: Insulin (51 aa).

Disulfide bonds link Cys-7–Cys-37, Cys-19–Cys-50, and Cys-36–Cys-41.

Belongs to the insulin family. Heterodimer of a B chain and an A chain linked by two disulfide bonds.

The protein localises to the secreted. Insulin decreases blood glucose concentration. It increases cell permeability to monosaccharides, amino acids and fatty acids. It accelerates glycolysis, the pentose phosphate cycle, and glycogen synthesis in liver. This chain is Insulin (INS), found in Acomys cahirinus (Cairo spiny mouse).